A 56-amino-acid chain; its full sequence is Large ribosomal subunit protein bL32 (56 aa).

Residues 1–26 (MAVQQNKKSRSKRGMRRSHDALSTAQ) are disordered. Basic residues predominate over residues 7–16 (KKSRSKRGMR).

The protein belongs to the bacterial ribosomal protein bL32 family.

This chain is Large ribosomal subunit protein bL32, found in Shewanella denitrificans (strain OS217 / ATCC BAA-1090 / DSM 15013).